The chain runs to 183 residues: Archaemetzincin (183 aa).

Residue histidine 132 coordinates Zn(2+). Glutamate 133 (proton acceptor) is an active-site residue. The Zn(2+) site is built by histidine 136, histidine 142, cysteine 143, cysteine 148, cysteine 167, and cysteine 170.

Belongs to the peptidase M54 family. As to quaternary structure, monomer. The cofactor is Zn(2+).

In terms of biological role, probable zinc metalloprotease whose natural substrate is unknown. This is Archaemetzincin from Aeropyrum pernix (strain ATCC 700893 / DSM 11879 / JCM 9820 / NBRC 100138 / K1).